A 174-amino-acid chain; its full sequence is Adenine phosphoribosyltransferase (174 aa).

The protein belongs to the purine/pyrimidine phosphoribosyltransferase family. In terms of assembly, homodimer.

It localises to the cytoplasm. It carries out the reaction AMP + diphosphate = 5-phospho-alpha-D-ribose 1-diphosphate + adenine. It participates in purine metabolism; AMP biosynthesis via salvage pathway; AMP from adenine: step 1/1. Functionally, catalyzes a salvage reaction resulting in the formation of AMP, that is energically less costly than de novo synthesis. The protein is Adenine phosphoribosyltransferase of Phocaeicola vulgatus (strain ATCC 8482 / DSM 1447 / JCM 5826 / CCUG 4940 / NBRC 14291 / NCTC 11154) (Bacteroides vulgatus).